The chain runs to 38 residues: Toxin CSTX-16 (38 aa).

Residues Gln19 and Gln38 each carry the glutamine amide modification.

It belongs to the cationic peptide 04 (cupiennin) family. 10 (double chain) subfamily. In terms of tissue distribution, expressed by the venom gland.

It localises to the secreted. This chain is Toxin CSTX-16, found in Cupiennius salei (American wandering spider).